The following is a 164-amino-acid chain: NADH-quinone oxidoreductase subunit I (164 aa).

4Fe-4S ferredoxin-type domains lie at 55–84 and 95–124; these read RRYE…IEID and KVYD…MGPY. Positions 64, 67, 70, 74, 104, 107, 110, and 114 each coordinate [4Fe-4S] cluster.

Belongs to the complex I 23 kDa subunit family. In terms of assembly, NDH-1 is composed of 14 different subunits. Subunits NuoA, H, J, K, L, M, N constitute the membrane sector of the complex. It depends on [4Fe-4S] cluster as a cofactor.

It localises to the cell inner membrane. It carries out the reaction a quinone + NADH + 5 H(+)(in) = a quinol + NAD(+) + 4 H(+)(out). In terms of biological role, NDH-1 shuttles electrons from NADH, via FMN and iron-sulfur (Fe-S) centers, to quinones in the respiratory chain. The immediate electron acceptor for the enzyme in this species is believed to be ubiquinone. Couples the redox reaction to proton translocation (for every two electrons transferred, four hydrogen ions are translocated across the cytoplasmic membrane), and thus conserves the redox energy in a proton gradient. This is NADH-quinone oxidoreductase subunit I from Magnetococcus marinus (strain ATCC BAA-1437 / JCM 17883 / MC-1).